The following is a 151-amino-acid chain: Prefoldin subunit alpha (151 aa).

Positions Thr120–Glu151 are disordered. Residues Gln133–Glu151 are compositionally biased toward low complexity.

Belongs to the prefoldin subunit alpha family. In terms of assembly, heterohexamer of two alpha and four beta subunits.

Its subcellular location is the cytoplasm. Functionally, molecular chaperone capable of stabilizing a range of proteins. Seems to fulfill an ATP-independent, HSP70-like function in archaeal de novo protein folding. The chain is Prefoldin subunit alpha from Natronomonas pharaonis (strain ATCC 35678 / DSM 2160 / CIP 103997 / JCM 8858 / NBRC 14720 / NCIMB 2260 / Gabara) (Halobacterium pharaonis).